Consider the following 303-residue polypeptide: Protoheme IX farnesyltransferase (303 aa).

The next 9 membrane-spanning stretches (helical) occupy residues 17–37 (GVVM…TEPA), 42–62 (LATF…SAAI), 91–111 (AAIT…YFLV), 114–134 (LTAW…TLYL), 142–162 (IVIG…AVTG), 168–188 (AWLL…ALAI), 208–228 (IPFT…CTLL), 231–251 (LTGM…LVFL), and 270–290 (FGYS…DHYL).

The protein belongs to the UbiA prenyltransferase family. Protoheme IX farnesyltransferase subfamily.

It localises to the cell inner membrane. It catalyses the reaction heme b + (2E,6E)-farnesyl diphosphate + H2O = Fe(II)-heme o + diphosphate. It participates in porphyrin-containing compound metabolism; heme O biosynthesis; heme O from protoheme: step 1/1. In terms of biological role, converts heme B (protoheme IX) to heme O by substitution of the vinyl group on carbon 2 of heme B porphyrin ring with a hydroxyethyl farnesyl side group. This chain is Protoheme IX farnesyltransferase, found in Alcanivorax borkumensis (strain ATCC 700651 / DSM 11573 / NCIMB 13689 / SK2).